Consider the following 291-residue polypeptide: Nucleotide-binding protein Athe_0320 (291 aa).

9-16 (GMSGAGKS) is a binding site for ATP. Residue 60-63 (DIRG) participates in GTP binding.

This sequence belongs to the RapZ-like family.

Functionally, displays ATPase and GTPase activities. The sequence is that of Nucleotide-binding protein Athe_0320 from Caldicellulosiruptor bescii (strain ATCC BAA-1888 / DSM 6725 / KCTC 15123 / Z-1320) (Anaerocellum thermophilum).